Reading from the N-terminus, the 510-residue chain is MEEFKRYIELDRSWQHNFFYPLIFQEYIYGFAYDHGLNKSILLENAGDKKYSLLIVKRLINRMYQQTHLILSANHSNQNDFFGHKHKKNLYYQIISEGFAVIVEIPFSLLLISSPEAEENQIVKSHNLRSIHSIFPFFEDKFLHLNYVLEILIPYPIHLEILVQTLRYWVKDASSLHLLRFFLYEYRNWNSLITPQKSNSIFSKRNQRLFLFLYNFHVCEYESIFFFLCNQSSHLRSTSFGALLERNYFYGKLEYLVKVKTFTKDFCLILWLFKDPFLHYVRYRGKSILASKGTSLLMHKWKYYLLNFWQCHFSLWSQPRRIYINRLSKHSLDFMGFFSSVRLNSSVIRSQMVANSFLIDNRIKKFDTIVRIIPLVGSLAKAKFCNVLGHPISKSVWTDLLDSDIIDRFGRICRNLSHYYGGSSRKKSLYRIKYILLLSCARTLARKHKSTVRAFLKRLGSAFLEEFFTTEEEKVLSLILPRDSSISGGLYRGPFWYLDIICIHDLANDE.

Belongs to the intron maturase 2 family. MatK subfamily.

It localises to the plastid. The protein resides in the chloroplast. Functionally, usually encoded in the trnK tRNA gene intron. Probably assists in splicing its own and other chloroplast group II introns. This is Maturase K from Mammillaria haageana (Cactus).